We begin with the raw amino-acid sequence, 289 residues long: Diaminopimelate epimerase (289 aa).

Substrate-binding residues include N13, Q47, and N67. C76 functions as the Proton donor in the catalytic mechanism. Substrate contacts are provided by residues 77–78 (GN), N167, N200, and 218–219 (ER). The active-site Proton acceptor is C227. 228–229 (GT) lines the substrate pocket.

Belongs to the diaminopimelate epimerase family. Homodimer.

The protein localises to the cytoplasm. It catalyses the reaction (2S,6S)-2,6-diaminopimelate = meso-2,6-diaminopimelate. Its pathway is amino-acid biosynthesis; L-lysine biosynthesis via DAP pathway; DL-2,6-diaminopimelate from LL-2,6-diaminopimelate: step 1/1. In terms of biological role, catalyzes the stereoinversion of LL-2,6-diaminopimelate (L,L-DAP) to meso-diaminopimelate (meso-DAP), a precursor of L-lysine and an essential component of the bacterial peptidoglycan. The chain is Diaminopimelate epimerase from Burkholderia mallei (strain NCTC 10247).